Reading from the N-terminus, the 302-residue chain is NAD kinase 2 (302 aa).

The active-site Proton acceptor is aspartate 78. NAD(+) contacts are provided by residues 78-79, 152-153, aspartate 182, 193-198, and alanine 217; these read DG, NE, and TAYSLS.

Belongs to the NAD kinase family. A divalent metal cation is required as a cofactor.

The protein resides in the cytoplasm. It carries out the reaction NAD(+) + ATP = ADP + NADP(+) + H(+). Its function is as follows. Involved in the regulation of the intracellular balance of NAD and NADP, and is a key enzyme in the biosynthesis of NADP. Catalyzes specifically the phosphorylation on 2'-hydroxyl of the adenosine moiety of NAD to yield NADP. The protein is NAD kinase 2 of Prochlorococcus marinus (strain SARG / CCMP1375 / SS120).